The following is a 450-amino-acid chain: FERM domain-containing protein 8 (450 aa).

In terms of domain architecture, FERM spans 28–373 (MDVIVYLIND…YCIELSQTTE (346 aa)).

The protein localises to the cytoplasm. It is found in the cytosol. Its subcellular location is the cell membrane. Promotes the cell surface stability of RHBDF1 and RHBDF2 and prevents their degradation via the endolysosomal pathway. By acting on RHBDF proteins, involved in ADAM17-mediated ligand shedding. May negatively regulate Wnt signaling. The chain is FERM domain-containing protein 8 (frmd8) from Xenopus tropicalis (Western clawed frog).